We begin with the raw amino-acid sequence, 541 residues long: Chaperonin GroEL, cyanelle (541 aa).

ATP contacts are provided by residues Thr-29 to Pro-32, Asp-86 to Thr-90, Gly-413, Asn-479 to Ala-481, and Asp-495.

The protein belongs to the chaperonin (HSP60) family. As to quaternary structure, forms a cylinder of 14 subunits composed of two heptameric rings stacked back-to-back. Interacts with the co-chaperonin GroES.

Its subcellular location is the plastid. It localises to the cyanelle. The enzyme catalyses ATP + H2O + a folded polypeptide = ADP + phosphate + an unfolded polypeptide.. In terms of biological role, together with its co-chaperonin GroES, plays an essential role in assisting protein folding. The GroEL-GroES system forms a nano-cage that allows encapsulation of the non-native substrate proteins and provides a physical environment optimized to promote and accelerate protein folding. This chain is Chaperonin GroEL, cyanelle, found in Cyanophora paradoxa.